Here is a 242-residue protein sequence, read N- to C-terminus: RNA transcription, translation and transport factor protein (242 aa).

It belongs to the RTRAF family. As to quaternary structure, homodimer. Component of a tRNA-splicing ligase complex.

The protein resides in the nucleus. The protein localises to the cytoplasm. Its subcellular location is the cytosol. It is found in the perinuclear region. It localises to the cytoskeleton. The protein resides in the microtubule organizing center. The protein localises to the centrosome. RNA-binding protein involved in modulation of mRNA transcription by Polymerase II. Component of the tRNA-splicing ligase complex. This Danio rerio (Zebrafish) protein is RNA transcription, translation and transport factor protein.